The chain runs to 315 residues: Trimethylguanosine synthase (315 aa).

Residues 1–58 (MGRTFIHASKIKHAARKRKHHSNFRTLIKLLNNDAYKIESSKPLKNGKLFKYWKNRRR) form a required for correct nucleolar localization region. Asp-126 contributes to the S-adenosyl-L-methionine binding site. Positions 271 to 315 (TENSRRESSEKEELSSENEELSKRKKHESTTTTKDNTVDIYDVNG) are disordered. Residues 273-284 (NSRRESSEKEEL) are compositionally biased toward basic and acidic residues.

Belongs to the methyltransferase superfamily. Trimethylguanosine synthase family. In terms of assembly, monomer. Interacts with the spliceosomal snRNP core component SMB1 and the snoRNP components CBF5 and NOP58.

The protein localises to the nucleus. The protein resides in the nucleolus. The catalysed reaction is a 5'-end (N(7)-methyl 5'-triphosphoguanosine)-ribonucleoside in snRNA + S-adenosyl-L-methionine = a 5'-end (N(2),N(7)-dimethyl 5'-triphosphoguanosine)-ribonucleoside in snRNA + S-adenosyl-L-homocysteine + H(+). It catalyses the reaction a 5'-end (N(7)-methyl 5'-triphosphoguanosine)-ribonucleoside in snoRNA + S-adenosyl-L-methionine = a 5'-end (N(2),N(7)-dimethyl 5'-triphosphoguanosine)-ribonucleoside in snoRNA + S-adenosyl-L-homocysteine + H(+). It carries out the reaction a 5'-end (N(2),N(7)-dimethyl 5'-triphosphoguanosine)-ribonucleoside in snRNA + S-adenosyl-L-methionine = a 5'-end (N(2),N(2),N(7)-trimethyl 5'-triphosphoguanosine)-ribonucleoside in snRNA + S-adenosyl-L-homocysteine + H(+). The enzyme catalyses a 5'-end (N(2),N(7)-dimethyl 5'-triphosphoguanosine)-ribonucleoside in snoRNA + S-adenosyl-L-methionine = a 5'-end (N(2),N(2),N(7)-trimethyl 5'-triphosphoguanosine)-ribonucleoside in snoRNA + S-adenosyl-L-homocysteine + H(+). Substrate inhibited by S-adenosyl-L-homocysteine. Catalyzes the two serial methylation steps for the conversion of the 7-monomethylguanosine (m(7)G) caps of snRNAs and snoRNAs to a 2,2,7-trimethylguanosine (m(2,2,7)G) cap structure. The enzyme is specific for guanine, and N7 methylation must precede N2 methylation. Hypermethylates the m3G cap on TLC1 telomerase which affects telomere silencing and telomere length regulation. Required for pre-mRNA splicing, pre-rRNA processing and small ribosomal subunit synthesis. Involved in nucleolar structural organization. In Saccharomyces cerevisiae (strain ATCC 204508 / S288c) (Baker's yeast), this protein is Trimethylguanosine synthase (TGS1).